The sequence spans 152 residues: UPF0225 protein YchJ (152 aa).

It belongs to the UPF0225 family.

The sequence is that of UPF0225 protein YchJ from Escherichia coli O6:K15:H31 (strain 536 / UPEC).